The sequence spans 90 residues: Probable Fe(2+)-trafficking protein (90 aa).

It belongs to the Fe(2+)-trafficking protein family.

In terms of biological role, could be a mediator in iron transactions between iron acquisition and iron-requiring processes, such as synthesis and/or repair of Fe-S clusters in biosynthetic enzymes. In Actinobacillus succinogenes (strain ATCC 55618 / DSM 22257 / CCUG 43843 / 130Z), this protein is Probable Fe(2+)-trafficking protein.